A 473-amino-acid polypeptide reads, in one-letter code: Cysteine--tRNA ligase (473 aa).

Residue cysteine 27 coordinates Zn(2+). A 'HIGH' region motif is present at residues 29 to 39 (ITPYDHMHVGH). Cysteine 213, histidine 238, and glutamate 242 together coordinate Zn(2+). The short motif at 271-275 (KMSKS) is the 'KMSKS' region element. Residue lysine 274 participates in ATP binding.

It belongs to the class-I aminoacyl-tRNA synthetase family. The cofactor is Zn(2+).

The protein localises to the cytoplasm. It carries out the reaction tRNA(Cys) + L-cysteine + ATP = L-cysteinyl-tRNA(Cys) + AMP + diphosphate. This chain is Cysteine--tRNA ligase, found in Pyrobaculum islandicum (strain DSM 4184 / JCM 9189 / GEO3).